The chain runs to 318 residues: Methionyl-tRNA formyltransferase (318 aa).

(6S)-5,6,7,8-tetrahydrofolate is bound at residue 114–117; it reads SLLP.

The protein belongs to the Fmt family.

The enzyme catalyses L-methionyl-tRNA(fMet) + (6R)-10-formyltetrahydrofolate = N-formyl-L-methionyl-tRNA(fMet) + (6S)-5,6,7,8-tetrahydrofolate + H(+). Functionally, attaches a formyl group to the free amino group of methionyl-tRNA(fMet). The formyl group appears to play a dual role in the initiator identity of N-formylmethionyl-tRNA by promoting its recognition by IF2 and preventing the misappropriation of this tRNA by the elongation apparatus. The sequence is that of Methionyl-tRNA formyltransferase from Protochlamydia amoebophila (strain UWE25).